A 438-amino-acid polypeptide reads, in one-letter code: Lipid-A-disaccharide synthase (438 aa).

Belongs to the LpxB family.

It carries out the reaction a lipid X + a UDP-2-N,3-O-bis[(3R)-3-hydroxyacyl]-alpha-D-glucosamine = a lipid A disaccharide + UDP + H(+). It functions in the pathway bacterial outer membrane biogenesis; LPS lipid A biosynthesis. Its function is as follows. Condensation of UDP-2,3-diacylglucosamine and 2,3-diacylglucosamine-1-phosphate to form lipid A disaccharide, a precursor of lipid A, a phosphorylated glycolipid that anchors the lipopolysaccharide to the outer membrane of the cell. In Xanthomonas campestris pv. campestris (strain 8004), this protein is Lipid-A-disaccharide synthase.